The sequence spans 382 residues: Lipid-A-disaccharide synthase (382 aa).

Belongs to the LpxB family.

The catalysed reaction is 2-N,3-O-bis[(3R)-3-hydroxytetradecanoyl]-alpha-D-glucosaminyl 1-phosphate + UDP-2-N,3-O-bis[(3R)-3-hydroxytetradecanoyl]-alpha-D-glucosamine = lipid A disaccharide (E. coli) + UDP + H(+). It catalyses the reaction a lipid X + a UDP-2-N,3-O-bis[(3R)-3-hydroxyacyl]-alpha-D-glucosamine = a lipid A disaccharide + UDP + H(+). The protein operates within glycolipid biosynthesis; lipid IV(A) biosynthesis; lipid IV(A) from (3R)-3-hydroxytetradecanoyl-[acyl-carrier-protein] and UDP-N-acetyl-alpha-D-glucosamine: step 5/6. In terms of biological role, condensation of UDP-2,3-diacylglucosamine and 2,3-diacylglucosamine-1-phosphate to form lipid A disaccharide, a precursor of lipid A, a phosphorylated glycolipid that anchors the lipopolysaccharide to the outer membrane of the cell. The polypeptide is Lipid-A-disaccharide synthase (Escherichia coli O127:H6 (strain E2348/69 / EPEC)).